The sequence spans 292 residues: Peroxisomal 2,4-dienoyl-CoA reductase [(3E)-enoyl-CoA-producing] (292 aa).

An N-acetylalanine modification is found at Ala-2. Residues 35 to 40 (GGGSGI), 60 to 64 (RSLQK), and Asp-86 each bind NADP(+). Residue Arg-60 coordinates substrate. Lys-64 is modified (N6-acetyllysine). Residues Arg-88, Phe-118, and 126–128 (SFN) contribute to the substrate site. N6-acetyllysine is present on Lys-151. NADP(+)-binding positions include Lys-182 and 208–214 (PGAISGT). A substrate-binding site is contributed by Arg-219. Ser-287 carries the post-translational modification Phosphoserine. Residues 290–292 (AKL) carry the Microbody targeting signal motif. At Lys-291 the chain carries N6-acetyllysine.

Belongs to the short-chain dehydrogenases/reductases (SDR) family. 2,4-dienoyl-CoA reductase subfamily. Monomer, dimer and oligomer.

It is found in the peroxisome. The enzyme catalyses a (2E,4Z)-dienoyl-CoA + NADPH + H(+) = a 4,5-saturated-(3E)-enoyl-CoA + NADP(+). The catalysed reaction is a (2E,4E)-dienoyl-CoA + NADPH + H(+) = a 4,5-saturated-(3E)-enoyl-CoA + NADP(+). It carries out the reaction (2E,4E)-hexadienoyl-CoA + NADPH + H(+) = (3E)-hexenoyl-CoA + NADP(+). It catalyses the reaction (2E,4E)-decadienoyl-CoA + NADPH + H(+) = (3E)-decenoyl-CoA + NADP(+). The enzyme catalyses (2E,4Z,7Z,10Z,13Z,16Z,19Z)-docosaheptaenoyl-CoA + NADPH + H(+) = (3E,7Z,10Z,13Z,16Z,19Z)-docosahexaenoyl-CoA + NADP(+). Auxiliary enzyme of beta-oxidation. Participates in the degradation of unsaturated fatty enoyl-CoA esters having double bonds in both even- and odd-numbered positions in peroxisome. Catalyzes the NADP-dependent reduction of 2,4-dienoyl-CoA to yield trans-3-enoyl-CoA. Has activity towards short and medium chain 2,4-dienoyl-CoAs, but also towards 2,4,7,10,13,16,19-docosaheptaenoyl-CoA, suggesting that it does not constitute a rate limiting step in the peroxisomal degradation of docosahexaenoic acid. The chain is Peroxisomal 2,4-dienoyl-CoA reductase [(3E)-enoyl-CoA-producing] (Decr2) from Mus musculus (Mouse).